Reading from the N-terminus, the 277-residue chain is Energy-coupling factor transporter ATP-binding protein EcfA1 (277 aa).

Positions 5–240 constitute an ABC transporter domain; the sequence is LEVENLVFKY…SEDMVEIGLD (236 aa). An ATP-binding site is contributed by 40 to 47; sequence GQNGSGKS.

This sequence belongs to the ABC transporter superfamily. Energy-coupling factor EcfA family. As to quaternary structure, forms a stable energy-coupling factor (ECF) transporter complex composed of 2 membrane-embedded substrate-binding proteins (S component), 2 ATP-binding proteins (A component) and 2 transmembrane proteins (T component).

The protein localises to the cell membrane. Functionally, ATP-binding (A) component of a common energy-coupling factor (ECF) ABC-transporter complex. Unlike classic ABC transporters this ECF transporter provides the energy necessary to transport a number of different substrates. This chain is Energy-coupling factor transporter ATP-binding protein EcfA1, found in Lactococcus lactis subsp. lactis (strain IL1403) (Streptococcus lactis).